The primary structure comprises 273 residues: 3-((Z)-2-isocyanoethenyl)-1H-indole synthase (273 aa).

His-105, Asp-107, and His-254 together coordinate Fe cation.

Belongs to the TfdA dioxygenase family. It depends on Fe(2+) as a cofactor.

The catalysed reaction is (2S)-3-(1H-indol-3-yl)-2-isocyanopropanoate + 2-oxoglutarate + O2 + H(+) = 3-[(Z)-2-isocyanoethenyl]-1H-indole + succinate + 2 CO2 + H2O. In terms of biological role, involved in the biosynthesis of ambiguines, a family of hapalindole-type alkaloids. Responsible for the synthesis of Z-3-(2-isocyanoethen)-indole, a biosynthetic precursor to all ambiguines. In Fischerella ambigua (strain UTEX 1903), this protein is 3-((Z)-2-isocyanoethenyl)-1H-indole synthase.